The sequence spans 103 residues: Large ribosomal subunit protein bL21 (103 aa).

This sequence belongs to the bacterial ribosomal protein bL21 family. In terms of assembly, part of the 50S ribosomal subunit. Contacts protein L20.

Functionally, this protein binds to 23S rRNA in the presence of protein L20. This is Large ribosomal subunit protein bL21 from Pectobacterium atrosepticum (strain SCRI 1043 / ATCC BAA-672) (Erwinia carotovora subsp. atroseptica).